The primary structure comprises 42 residues: Phospholipase A1 (42 aa).

It belongs to the AB hydrolase superfamily. Lipase family. In terms of processing, contains six disulfide bonds. Expressed by the venom gland.

The protein localises to the secreted. The enzyme catalyses a 1,2-diacyl-sn-glycero-3-phosphocholine + H2O = a 2-acyl-sn-glycero-3-phosphocholine + a fatty acid + H(+). Functionally, catalyzes the hydrolysis of phosphatidylcholine with phospholipase A1 activity. May act as an allergen and induce hemolytic activity. The chain is Phospholipase A1 from Polistes gallicus (Paper wasp).